A 457-amino-acid polypeptide reads, in one-letter code: tRNA modification GTPase MnmE (457 aa).

(6S)-5-formyl-5,6,7,8-tetrahydrofolate is bound by residues Arg23, Glu85, and Arg124. Positions 220–376 constitute a TrmE-type G domain; the sequence is GALVVLAGQV…LVTAIRAAVL (157 aa). Asn230 is a binding site for K(+). Residues 230-235, 249-255, and 274-277 each bind GTP; these read NAGKSS, TDLPGTT, and DTAG. Ser234 provides a ligand contact to Mg(2+). The K(+) site is built by Thr249, Leu251, and Thr254. Thr255 provides a ligand contact to Mg(2+). Position 457 (Lys457) interacts with (6S)-5-formyl-5,6,7,8-tetrahydrofolate.

Belongs to the TRAFAC class TrmE-Era-EngA-EngB-Septin-like GTPase superfamily. TrmE GTPase family. Homodimer. Heterotetramer of two MnmE and two MnmG subunits. K(+) serves as cofactor.

The protein localises to the cytoplasm. Functionally, exhibits a very high intrinsic GTPase hydrolysis rate. Involved in the addition of a carboxymethylaminomethyl (cmnm) group at the wobble position (U34) of certain tRNAs, forming tRNA-cmnm(5)s(2)U34. The polypeptide is tRNA modification GTPase MnmE (Nitratidesulfovibrio vulgaris (strain ATCC 29579 / DSM 644 / CCUG 34227 / NCIMB 8303 / VKM B-1760 / Hildenborough) (Desulfovibrio vulgaris)).